A 178-amino-acid polypeptide reads, in one-letter code: Deoxycytidylate deaminase (178 aa).

One can recognise a CMP/dCMP-type deaminase domain in the interval 14-146 (EWPEYFMAVA…EATAARLLFD (133 aa)). His84 lines the Zn(2+) pocket. Catalysis depends on Glu86, which acts as the Proton donor. The Zn(2+) site is built by Cys110 and Cys113. Ser174 is modified (phosphoserine).

It belongs to the cytidine and deoxycytidylate deaminase family. In terms of assembly, homohexamer. Zn(2+) is required as a cofactor.

The enzyme catalyses dCMP + H2O + H(+) = dUMP + NH4(+). It carries out the reaction 5-hydroxymethyl-dCMP + H2O + H(+) = 5-hydroxymethyl-dUMP + NH4(+). Its activity is regulated as follows. Allosteric enzyme whose activity is greatly influenced by the end products of its metabolic pathway, dCTP and dTTP. In terms of biological role, catalyzes the deamination of dCMP to dUMP, providing the nucleoside monophosphate substrate for the thymidylate synthase/TYMS. Also, part of a nucleotide salvage pathway that eliminates epigenetically modified 5-hydroxymethyl-dCMP (hmdCMP) in a two-step process entailing deamination to cytotoxic 5-hydroxymethyl-dUMP (hmdUMP), followed by its hydrolysis into 5-hydroxymethyluracil (hmU) and 2-deoxy-D-ribose 5-phosphate (deoxyribosephosphate). Catalyzes the first step in that pathway, the deamination of 5-hydroxymethyl-dCMP (hmdCMP). This chain is Deoxycytidylate deaminase, found in Pongo abelii (Sumatran orangutan).